The sequence spans 487 residues: Aspartyl/glutamyl-tRNA(Asn/Gln) amidotransferase subunit B (487 aa).

Belongs to the GatB/GatE family. GatB subfamily. Heterotrimer of A, B and C subunits.

The catalysed reaction is L-glutamyl-tRNA(Gln) + L-glutamine + ATP + H2O = L-glutaminyl-tRNA(Gln) + L-glutamate + ADP + phosphate + H(+). It catalyses the reaction L-aspartyl-tRNA(Asn) + L-glutamine + ATP + H2O = L-asparaginyl-tRNA(Asn) + L-glutamate + ADP + phosphate + 2 H(+). Functionally, allows the formation of correctly charged Asn-tRNA(Asn) or Gln-tRNA(Gln) through the transamidation of misacylated Asp-tRNA(Asn) or Glu-tRNA(Gln) in organisms which lack either or both of asparaginyl-tRNA or glutaminyl-tRNA synthetases. The reaction takes place in the presence of glutamine and ATP through an activated phospho-Asp-tRNA(Asn) or phospho-Glu-tRNA(Gln). This is Aspartyl/glutamyl-tRNA(Asn/Gln) amidotransferase subunit B from Acidiphilium cryptum (strain JF-5).